Consider the following 281-residue polypeptide: Pantothenate synthetase (281 aa).

30-37 (MGYLHEGH) is a binding site for ATP. His37 serves as the catalytic Proton donor. Residue Gln61 coordinates (R)-pantoate. Residue Gln61 participates in beta-alanine binding. 147 to 150 (GQKD) provides a ligand contact to ATP. (R)-pantoate is bound at residue Gln153. Residues Val176 and 184–187 (MSSR) contribute to the ATP site.

The protein belongs to the pantothenate synthetase family. Homodimer.

It is found in the cytoplasm. The catalysed reaction is (R)-pantoate + beta-alanine + ATP = (R)-pantothenate + AMP + diphosphate + H(+). The protein operates within cofactor biosynthesis; (R)-pantothenate biosynthesis; (R)-pantothenate from (R)-pantoate and beta-alanine: step 1/1. Catalyzes the condensation of pantoate with beta-alanine in an ATP-dependent reaction via a pantoyl-adenylate intermediate. The polypeptide is Pantothenate synthetase (Acetivibrio thermocellus (strain ATCC 27405 / DSM 1237 / JCM 9322 / NBRC 103400 / NCIMB 10682 / NRRL B-4536 / VPI 7372) (Clostridium thermocellum)).